The primary structure comprises 552 residues: Putative transport protein HS_1470 (552 aa).

5 consecutive transmembrane segments (helical) span residues 4 to 24 (IAIT…IGHW), 28 to 48 (GVGL…HFMN), 67 to 87 (LILF…ASLL), 95 to 115 (GLAT…YKVV), and 157 to 177 (MAYA…MWLI). RCK C-terminal domains are found at residues 190–275 (KQFQ…VIGE) and 277–360 (IDMP…IIGN). A run of 6 helical transmembrane segments spans residues 370-390 (MLPV…PFYI), 402-424 (AGGP…LYWF), 438-458 (IVLF…DTLV), 463-483 (LEWM…TGII), 495-515 (LCGL…ANAI), and 529-549 (VYPL…ILLW).

Belongs to the AAE transporter (TC 2.A.81) family. YidE subfamily.

The protein localises to the cell membrane. In Histophilus somni (strain 129Pt) (Haemophilus somnus), this protein is Putative transport protein HS_1470.